The following is a 1108-amino-acid chain: Multidrug resistance regulator 1 (1108 aa).

A compositionally biased stretch (polar residues) spans 1–19 (MSIATTPIETPKSPKSTEP). The tract at residues 1–27 (MSIATTPIETPKSPKSTEPQVRKRKKV) is disordered. The zn(2)-C6 fungal-type DNA-binding region spans 31–59 (CTNCRKRKIRCDRQHPCNNCIKSKKHNAC). Residues 68 to 83 (PANFSTNGSSHGNTVP) show a composition bias toward polar residues. Disordered stretches follow at residues 68-138 (PANF…SENE), 968-990 (DQTY…LDSR), and 1021-1064 (AQQQ…YYGN). Composition is skewed to basic and acidic residues over residues 86-104 (RPYE…EAPR) and 114-123 (NERKNSKKSP). The segment covering 124–138 (DNTVANNQQTASENE) has biased composition (polar residues). The stretch at 134–165 (ASENEVTITLSELNMLKQRLQNIEANINAQSN) forms a coiled coil. 2 stretches are compositionally biased toward low complexity: residues 970-980 (TYSTSSESSST) and 1023-1041 (QQRQ…QSQS).

It localises to the nucleus. Transcription factor that acts as the central regulator of the MDR1 efflux pump. Other target genes include those encoding oxidoreductases, whose up-regulation in fluconazole-resistant isolates may help to prevent cell damage resulting from the generation of toxic molecules in the presence of fluconazole and thereby contribute to drug resistance. The chain is Multidrug resistance regulator 1 from Candida albicans (strain SC5314 / ATCC MYA-2876) (Yeast).